The primary structure comprises 214 residues: Phosphatidylserine decarboxylase proenzyme (214 aa).

Serine 182 functions as the Schiff-base intermediate with substrate; via pyruvic acid in the catalytic mechanism. Serine 182 carries the pyruvic acid (Ser); by autocatalysis modification.

Belongs to the phosphatidylserine decarboxylase family. PSD-A subfamily. In terms of assembly, heterodimer of a large membrane-associated beta subunit and a small pyruvoyl-containing alpha subunit. Pyruvate is required as a cofactor. Post-translationally, is synthesized initially as an inactive proenzyme. Formation of the active enzyme involves a self-maturation process in which the active site pyruvoyl group is generated from an internal serine residue via an autocatalytic post-translational modification. Two non-identical subunits are generated from the proenzyme in this reaction, and the pyruvate is formed at the N-terminus of the alpha chain, which is derived from the carboxyl end of the proenzyme. The post-translation cleavage follows an unusual pathway, termed non-hydrolytic serinolysis, in which the side chain hydroxyl group of the serine supplies its oxygen atom to form the C-terminus of the beta chain, while the remainder of the serine residue undergoes an oxidative deamination to produce ammonia and the pyruvoyl prosthetic group on the alpha chain.

Its subcellular location is the cell membrane. It carries out the reaction a 1,2-diacyl-sn-glycero-3-phospho-L-serine + H(+) = a 1,2-diacyl-sn-glycero-3-phosphoethanolamine + CO2. It functions in the pathway phospholipid metabolism; phosphatidylethanolamine biosynthesis; phosphatidylethanolamine from CDP-diacylglycerol: step 2/2. In terms of biological role, catalyzes the formation of phosphatidylethanolamine (PtdEtn) from phosphatidylserine (PtdSer). The chain is Phosphatidylserine decarboxylase proenzyme from Burkholderia multivorans (strain ATCC 17616 / 249).